Consider the following 305-residue polypeptide: Ribosomal RNA small subunit methyltransferase H (305 aa).

Residues 49–51, Asp-68, Phe-100, Asp-116, and Gln-123 each bind S-adenosyl-L-methionine; that span reads GGH.

It belongs to the methyltransferase superfamily. RsmH family.

It is found in the cytoplasm. The catalysed reaction is cytidine(1402) in 16S rRNA + S-adenosyl-L-methionine = N(4)-methylcytidine(1402) in 16S rRNA + S-adenosyl-L-homocysteine + H(+). Functionally, specifically methylates the N4 position of cytidine in position 1402 (C1402) of 16S rRNA. This chain is Ribosomal RNA small subunit methyltransferase H, found in Synechocystis sp. (strain ATCC 27184 / PCC 6803 / Kazusa).